Reading from the N-terminus, the 597-residue chain is DNA import protein CedB (597 aa).

The chain crosses the membrane as a helical span at residues 10–30 (VVLLILGIISFNLVFIILAII). An ATP-binding site is contributed by 286–293 (GPTGSGKT).

It is found in the cell membrane. In terms of biological role, part of the Ced system, which is involved in DNA import. In Sulfolobus acidocaldarius (strain ATCC 33909 / DSM 639 / JCM 8929 / NBRC 15157 / NCIMB 11770), this protein is DNA import protein CedB.